We begin with the raw amino-acid sequence, 475 residues long: Aspartyl/glutamyl-tRNA(Asn/Gln) amidotransferase subunit B (475 aa).

Belongs to the GatB/GatE family. GatB subfamily. Heterotrimer of A, B and C subunits.

The catalysed reaction is L-glutamyl-tRNA(Gln) + L-glutamine + ATP + H2O = L-glutaminyl-tRNA(Gln) + L-glutamate + ADP + phosphate + H(+). It carries out the reaction L-aspartyl-tRNA(Asn) + L-glutamine + ATP + H2O = L-asparaginyl-tRNA(Asn) + L-glutamate + ADP + phosphate + 2 H(+). In terms of biological role, allows the formation of correctly charged Asn-tRNA(Asn) or Gln-tRNA(Gln) through the transamidation of misacylated Asp-tRNA(Asn) or Glu-tRNA(Gln) in organisms which lack either or both of asparaginyl-tRNA or glutaminyl-tRNA synthetases. The reaction takes place in the presence of glutamine and ATP through an activated phospho-Asp-tRNA(Asn) or phospho-Glu-tRNA(Gln). This Hydrogenovibrio crunogenus (strain DSM 25203 / XCL-2) (Thiomicrospira crunogena) protein is Aspartyl/glutamyl-tRNA(Asn/Gln) amidotransferase subunit B.